Consider the following 594-residue polypeptide: Elongation factor 4 (594 aa).

Positions 2–184 (KNIRNFSIIA…TIVAKVPAPE (183 aa)) constitute a tr-type G domain. GTP is bound by residues 14-19 (DHGKST) and 131-134 (NKID).

This sequence belongs to the TRAFAC class translation factor GTPase superfamily. Classic translation factor GTPase family. LepA subfamily.

It localises to the cell inner membrane. The enzyme catalyses GTP + H2O = GDP + phosphate + H(+). Its function is as follows. Required for accurate and efficient protein synthesis under certain stress conditions. May act as a fidelity factor of the translation reaction, by catalyzing a one-codon backward translocation of tRNAs on improperly translocated ribosomes. Back-translocation proceeds from a post-translocation (POST) complex to a pre-translocation (PRE) complex, thus giving elongation factor G a second chance to translocate the tRNAs correctly. Binds to ribosomes in a GTP-dependent manner. In Francisella tularensis subsp. novicida (strain U112), this protein is Elongation factor 4.